A 464-amino-acid polypeptide reads, in one-letter code: Cysteine--tRNA ligase (464 aa).

Position 27 (Cys-27) interacts with Zn(2+). Residues 29 to 39 carry the 'HIGH' region motif; it reads PTVYNFFHIGN. Zn(2+) contacts are provided by Cys-207, His-232, and Glu-236. Residues 264 to 268 carry the 'KMSKS' region motif; that stretch reads KMSKS. Lys-267 is a binding site for ATP.

This sequence belongs to the class-I aminoacyl-tRNA synthetase family. As to quaternary structure, monomer. Zn(2+) serves as cofactor.

It is found in the cytoplasm. The enzyme catalyses tRNA(Cys) + L-cysteine + ATP = L-cysteinyl-tRNA(Cys) + AMP + diphosphate. The sequence is that of Cysteine--tRNA ligase from Clostridium acetobutylicum (strain ATCC 824 / DSM 792 / JCM 1419 / IAM 19013 / LMG 5710 / NBRC 13948 / NRRL B-527 / VKM B-1787 / 2291 / W).